The sequence spans 171 residues: MKCPFCGDPNTQVADTRENEGGEVVRRRRRCPKCDKRFTTYERIDLKMPHIVKRNGNRSEFEHDKLAGSMKLALRKRPVTLEALDAAVDRIEAKLLALGEQEVPSEKVGELVMRELKKLDKVAYIRFASVYRNFADVDEFAEVIREVKARPKRNRPAEPPEPTSENDLFRS.

The segment at 3-34 (CPFCGDPNTQVADTRENEGGEVVRRRRRCPKC) is a zinc-finger region. The 91-residue stretch at 49 to 139 (PHIVKRNGNR…VYRNFADVDE (91 aa)) folds into the ATP-cone domain. A disordered region spans residues 148 to 171 (KARPKRNRPAEPPEPTSENDLFRS).

It belongs to the NrdR family. Requires Zn(2+) as cofactor.

Its function is as follows. Negatively regulates transcription of bacterial ribonucleotide reductase nrd genes and operons by binding to NrdR-boxes. The polypeptide is Transcriptional repressor NrdR (Aromatoleum aromaticum (strain DSM 19018 / LMG 30748 / EbN1) (Azoarcus sp. (strain EbN1))).